The primary structure comprises 465 residues: tRNA-2-methylthio-N(6)-dimethylallyladenosine synthase (465 aa).

The region spanning 5-125 (RKLHIKSFGC…LPELLEKARR (121 aa)) is the MTTase N-terminal domain. The [4Fe-4S] cluster site is built by Cys-14, Cys-50, Cys-88, Cys-166, Cys-170, and Cys-173. Residues 152–382 (RARGVSAFVT…QLQGLIDSQQ (231 aa)) form the Radical SAM core domain. Positions 387–449 (RASIGTTVDV…RYSLIGELVK (63 aa)) constitute a TRAM domain.

It belongs to the methylthiotransferase family. MiaB subfamily. Monomer. The cofactor is [4Fe-4S] cluster.

It is found in the cytoplasm. It carries out the reaction N(6)-dimethylallyladenosine(37) in tRNA + (sulfur carrier)-SH + AH2 + 2 S-adenosyl-L-methionine = 2-methylsulfanyl-N(6)-dimethylallyladenosine(37) in tRNA + (sulfur carrier)-H + 5'-deoxyadenosine + L-methionine + A + S-adenosyl-L-homocysteine + 2 H(+). Functionally, catalyzes the methylthiolation of N6-(dimethylallyl)adenosine (i(6)A), leading to the formation of 2-methylthio-N6-(dimethylallyl)adenosine (ms(2)i(6)A) at position 37 in tRNAs that read codons beginning with uridine. This is tRNA-2-methylthio-N(6)-dimethylallyladenosine synthase from Rhodopseudomonas palustris (strain BisA53).